A 415-amino-acid polypeptide reads, in one-letter code: DNA polymerase IV (415 aa).

Residues 15-196 enclose the UmuC domain; sequence ILHVDMNCFF…LSVEAMHGIG (182 aa). D19 and D115 together coordinate Mg(2+). The active site involves E116. Residues 235–246 are compositionally biased toward basic and acidic residues; the sequence is KRAKGTDDREVD. Residues 235 to 260 are disordered; that stretch reads KRAKGTDDREVDPSQMGQHKSVGNSM. Residues 249 to 260 show a composition bias toward polar residues; it reads QMGQHKSVGNSM.

This sequence belongs to the DNA polymerase type-Y family. In terms of assembly, monomer. Mg(2+) is required as a cofactor.

It is found in the cytoplasm. The catalysed reaction is DNA(n) + a 2'-deoxyribonucleoside 5'-triphosphate = DNA(n+1) + diphosphate. Its function is as follows. Poorly processive, error-prone DNA polymerase involved in untargeted mutagenesis. Copies undamaged DNA at stalled replication forks, which arise in vivo from mismatched or misaligned primer ends. These misaligned primers can be extended by PolIV. Exhibits no 3'-5' exonuclease (proofreading) activity. May be involved in translesional synthesis, in conjunction with the beta clamp from PolIII. The protein is DNA polymerase IV of Bacillus cereus (strain ATCC 14579 / DSM 31 / CCUG 7414 / JCM 2152 / NBRC 15305 / NCIMB 9373 / NCTC 2599 / NRRL B-3711).